The following is a 61-amino-acid chain: Small ribosomal subunit protein uS14 (61 aa).

Residues C24, C27, C40, and C43 each contribute to the Zn(2+) site.

Belongs to the universal ribosomal protein uS14 family. Zinc-binding uS14 subfamily. Part of the 30S ribosomal subunit. Contacts proteins S3 and S10. Zn(2+) is required as a cofactor.

Binds 16S rRNA, required for the assembly of 30S particles and may also be responsible for determining the conformation of the 16S rRNA at the A site. The protein is Small ribosomal subunit protein uS14 of Bacillus anthracis (strain A0248).